Here is a 740-residue protein sequence, read N- to C-terminus: UvrABC system protein B (740 aa).

Positions 1-36 (MTIAIRTTLDEPENHSDFVPHRPSRPEKTEPSKPFR) are disordered. The segment covering 8 to 33 (TLDEPENHSDFVPHRPSRPEKTEPSK) has biased composition (basic and acidic residues). A Helicase ATP-binding domain is found at 56 to 444 (KDIQKGERDQ…GGVFVEQIIR (389 aa)). Residue 69–76 (GVTGSGKT) coordinates ATP. Residues 122 to 145 (YYDYYQPEAYVPRTDTYIEKDSAI) carry the Beta-hairpin motif. The Helicase C-terminal domain maps to 461–627 (QVDNLIFEAK…TVKRQVDDIV (167 aa)). One can recognise a UVR domain in the interval 651–686 (ARSISETEKEMLEAAANLEFEKAAQLRDVLHQLKRQ). The segment at 687 to 740 (ELGLPPEKSSEIQGRSEAGRPGTRKTRSDKAREAKASKRVKQEAGEKLLRSRGH) is disordered. The segment covering 712 to 740 (TRSDKAREAKASKRVKQEAGEKLLRSRGH) has biased composition (basic and acidic residues).

It belongs to the UvrB family. Forms a heterotetramer with UvrA during the search for lesions. Interacts with UvrC in an incision complex.

It is found in the cytoplasm. In terms of biological role, the UvrABC repair system catalyzes the recognition and processing of DNA lesions. A damage recognition complex composed of 2 UvrA and 2 UvrB subunits scans DNA for abnormalities. Upon binding of the UvrA(2)B(2) complex to a putative damaged site, the DNA wraps around one UvrB monomer. DNA wrap is dependent on ATP binding by UvrB and probably causes local melting of the DNA helix, facilitating insertion of UvrB beta-hairpin between the DNA strands. Then UvrB probes one DNA strand for the presence of a lesion. If a lesion is found the UvrA subunits dissociate and the UvrB-DNA preincision complex is formed. This complex is subsequently bound by UvrC and the second UvrB is released. If no lesion is found, the DNA wraps around the other UvrB subunit that will check the other stand for damage. This Zymomonas mobilis subsp. mobilis (strain ATCC 31821 / ZM4 / CP4) protein is UvrABC system protein B.